The sequence spans 481 residues: Cobyric acid synthase (481 aa).

In terms of domain architecture, GATase cobBQ-type spans 244-431 (VLRVVIPVLP…LHGLFDAPEA (188 aa)). Cys325 (nucleophile) is an active-site residue. Residue His423 is part of the active site.

This sequence belongs to the CobB/CobQ family. CobQ subfamily.

Its pathway is cofactor biosynthesis; adenosylcobalamin biosynthesis. Its function is as follows. Catalyzes amidations at positions B, D, E, and G on adenosylcobyrinic A,C-diamide. NH(2) groups are provided by glutamine, and one molecule of ATP is hydrogenolyzed for each amidation. The protein is Cobyric acid synthase of Ralstonia nicotianae (strain ATCC BAA-1114 / GMI1000) (Ralstonia solanacearum).